Here is a 270-residue protein sequence, read N- to C-terminus: Glucosamine-6-phosphate deaminase (270 aa).

Catalysis depends on D72, which acts as the Proton acceptor; for enolization step. D141 (for ring-opening step) is an active-site residue. H143 acts as the Proton acceptor; for ring-opening step in catalysis. Residue E148 is the For ring-opening step of the active site.

Belongs to the glucosamine/galactosamine-6-phosphate isomerase family. NagB subfamily.

It carries out the reaction alpha-D-glucosamine 6-phosphate + H2O = beta-D-fructose 6-phosphate + NH4(+). It functions in the pathway amino-sugar metabolism; N-acetylneuraminate degradation; D-fructose 6-phosphate from N-acetylneuraminate: step 5/5. With respect to regulation, allosterically activated by N-acetylglucosamine 6-phosphate (GlcNAc6P). Its function is as follows. Catalyzes the reversible isomerization-deamination of glucosamine 6-phosphate (GlcN6P) to form fructose 6-phosphate (Fru6P) and ammonium ion. The polypeptide is Glucosamine-6-phosphate deaminase (Treponema denticola (strain ATCC 35405 / DSM 14222 / CIP 103919 / JCM 8153 / KCTC 15104)).